The following is a 287-amino-acid chain: Elongation factor Ts (287 aa).

The segment at 80-83 (TDFL) is involved in Mg(2+) ion dislocation from EF-Tu.

This sequence belongs to the EF-Ts family.

It localises to the cytoplasm. Its function is as follows. Associates with the EF-Tu.GDP complex and induces the exchange of GDP to GTP. It remains bound to the aminoacyl-tRNA.EF-Tu.GTP complex up to the GTP hydrolysis stage on the ribosome. The sequence is that of Elongation factor Ts from Stutzerimonas stutzeri (strain A1501) (Pseudomonas stutzeri).